The following is a 176-amino-acid chain: Disulfide bond formation protein B (176 aa).

The Cytoplasmic portion of the chain corresponds to Met1 to Ser13. A helical transmembrane segment spans residues Trp14 to Phe30. The Periplasmic portion of the chain corresponds to Phe31–Val48. Cys40 and Cys43 are disulfide-bonded. A helical membrane pass occupies residues Ala49–Pro64. Residues Gln65 to Trp71 are Cytoplasmic-facing. The helical transmembrane segment at Ala72–Ile89 threads the bilayer. The Periplasmic segment spans residues Glu90–Gln144. A disulfide bond links Cys104 and Cys130. The helical transmembrane segment at Trp145–Ala163 threads the bilayer. At Gln164–Met176 the chain is on the cytoplasmic side.

Belongs to the DsbB family.

The protein resides in the cell inner membrane. In terms of biological role, required for disulfide bond formation in some periplasmic proteins. Acts by oxidizing the DsbA protein. The polypeptide is Disulfide bond formation protein B (Photobacterium profundum (strain SS9)).